A 726-amino-acid polypeptide reads, in one-letter code: MSMSEETNNSLSSGKCPFHHGGSDQSAGEGTGSRDWWPKQLRVELLNQHSNRSNPLGEDFDYRKEFSKLDYSALKGDIKALLTDSQSWWPADWGSYVGLFIRMAWHGAGTYRSVDGRGGAGRGQQRFAPLNAWPDNVSLDKARRLLWPIKQKYGQKISWADLYILAGNVALENSGFRTFGFGAGREDVWEPDMDVNWGDEKAWLTHRDPESLAKRPLAATEMGLIYVNPEGPNASGEPLSAAAAIRATFGNMGMNDEETVALIAGGHTLGKTHGAAAATHVGVDPEGSLIESQGLGWTSTHGTGVGADAITSGLEVVWSQTPTQWSNYFFENLFKYEWVQTRSPAGAIQFEAVDAPEIIPDPFDPSKKRKPTMLVTDLTLRFDPEFEKISRRFLNDPQAFNEAFARAWYKLTHRDMGPKARYIGPEVPKEDLIWQDPLPQAVFNPSQEDIASLKAEIVASGLSVSELVSVAWASASTFRGGDKRGGANGARLALAPQRDWDVNAAAVRALPTLEAIQRTTNKASLADIIVLAGVVGVEQAAKAAGVYITVPFTPGRVDARQDQTDIEMFNLLEPIADGFRNYRAQVDVSTTESLLIDKAQQLTLTAPELTALVGGMRVLGANFDGSQNGVFTDRVGVLTTDFFVNLLDMGTQWKATDESNELFAGSDRASGEVKYTATRADLVFGSNAVLRALAEVYASQDASEKFVKDFVAAWTKVMNLDRFDVK.

The span at 1-13 (MSMSEETNNSLSS) shows a compositional bias: polar residues. The disordered stretch occupies residues 1 to 34 (MSMSEETNNSLSSGKCPFHHGGSDQSAGEGTGSR). The segment at residues 105–226 (WHGAGTYRSV…LAATEMGLIY (122 aa)) is a cross-link (tryptophyl-tyrosyl-methioninium (Trp-Tyr) (with M-252)). Histidine 106 acts as the Proton acceptor in catalysis. Positions 226–252 (YVNPEGPNASGEPLSAAAAIRATFGNM) form a cross-link, tryptophyl-tyrosyl-methioninium (Tyr-Met) (with W-105). A heme b-binding site is contributed by histidine 267.

Belongs to the peroxidase family. Peroxidase/catalase subfamily. Homodimer or homotetramer. Requires heme b as cofactor. Formation of the three residue Trp-Tyr-Met cross-link is important for the catalase, but not the peroxidase activity of the enzyme.

The enzyme catalyses H2O2 + AH2 = A + 2 H2O. The catalysed reaction is 2 H2O2 = O2 + 2 H2O. Its function is as follows. Bifunctional enzyme with both catalase and broad-spectrum peroxidase activity. This is Catalase-peroxidase from Enterobacter sp. (strain 638).